The sequence spans 433 residues: ATP-dependent protease ATPase subunit HslU (433 aa).

ATP-binding positions include Val18, 60 to 65, Asp246, Glu311, and Arg383; that span reads GVGKTE.

This sequence belongs to the ClpX chaperone family. HslU subfamily. As to quaternary structure, a double ring-shaped homohexamer of HslV is capped on each side by a ring-shaped HslU homohexamer. The assembly of the HslU/HslV complex is dependent on binding of ATP.

It localises to the cytoplasm. In terms of biological role, ATPase subunit of a proteasome-like degradation complex; this subunit has chaperone activity. The binding of ATP and its subsequent hydrolysis by HslU are essential for unfolding of protein substrates subsequently hydrolyzed by HslV. HslU recognizes the N-terminal part of its protein substrates and unfolds these before they are guided to HslV for hydrolysis. This Rhodopseudomonas palustris (strain ATCC BAA-98 / CGA009) protein is ATP-dependent protease ATPase subunit HslU.